The chain runs to 145 residues: MKFQVKALAAIAAFAALPALAQEGDPEAGAKAFNQCQTCHVIVDDSGTTIAGRNAKTGPNLYGVVGRTAGTQADFKGYGEGMKEAGAKGLAWDEEHFVQYVQDPTKFLKEYTGDAKAKGKMTFKLKKEADAHNIWAYLQQVAVRP.

An N-terminal signal peptide occupies residues 1–21 (MKFQVKALAAIAAFAALPALA). Position 22 is a pyrrolidone carboxylic acid (Q22). Heme c-binding residues include C36, C39, H40, and M121.

The protein belongs to the cytochrome c family. In terms of processing, binds 1 heme c group covalently per subunit.

Its subcellular location is the periplasm. In terms of biological role, cytochrome c2 is found mainly in purple, non-sulfur, photosynthetic bacteria where it functions as the electron donor to the oxidized bacteriochlorophyll in the photophosphorylation pathway. However, it may also have a role in the respiratory chain and is found in some non-photosynthetic bacteria. This Cereibacter sphaeroides (strain ATCC 17023 / DSM 158 / JCM 6121 / CCUG 31486 / LMG 2827 / NBRC 12203 / NCIMB 8253 / ATH 2.4.1.) (Rhodobacter sphaeroides) protein is Cytochrome c2 (cycA).